A 334-amino-acid polypeptide reads, in one-letter code: Glyceraldehyde-3-phosphate dehydrogenase (334 aa).

Residues 12-13 (TI) and G111 contribute to the NAD(+) site. 140-142 (SCN) contacts D-glyceraldehyde 3-phosphate. C141 functions as the Nucleophile in the catalytic mechanism. R167 serves as a coordination point for NAD(+). Residue 192–193 (HG) participates in D-glyceraldehyde 3-phosphate binding. Q298 is a binding site for NAD(+).

It belongs to the glyceraldehyde-3-phosphate dehydrogenase family. Homotetramer.

Its subcellular location is the encapsulin nanocompartment. It catalyses the reaction D-glyceraldehyde 3-phosphate + phosphate + NADP(+) = (2R)-3-phospho-glyceroyl phosphate + NADPH + H(+). The enzyme catalyses D-glyceraldehyde 3-phosphate + phosphate + NAD(+) = (2R)-3-phospho-glyceroyl phosphate + NADH + H(+). It participates in carbohydrate degradation; glycolysis; pyruvate from D-glyceraldehyde 3-phosphate: step 1/5. Its function is as follows. Possible cargo protein of a type 4B encapsulin nanocompartment. Active in the presence of NAD and NADP, prefers NADP. The chain is Glyceraldehyde-3-phosphate dehydrogenase (gap) from Pyrococcus furiosus (strain ATCC 43587 / DSM 3638 / JCM 8422 / Vc1).